Reading from the N-terminus, the 24-residue chain is Aldehyde dehydrogenase gamma chain (24 aa).

Heterotrimer composed of an alpha, a beta and a gamma chain. Requires [2Fe-2S] cluster as cofactor.

The catalysed reaction is an aldehyde + a quinone + H2O = a quinol + a carboxylate + H(+). The chain is Aldehyde dehydrogenase gamma chain from Comamonas testosteroni (Pseudomonas testosteroni).